The sequence spans 377 residues: tRNA pseudouridine synthase B (377 aa).

The active-site Nucleophile is D53.

This sequence belongs to the pseudouridine synthase TruB family. Type 1 subfamily.

It catalyses the reaction uridine(55) in tRNA = pseudouridine(55) in tRNA. Its function is as follows. Responsible for synthesis of pseudouridine from uracil-55 in the psi GC loop of transfer RNAs. In Tropheryma whipplei (strain Twist) (Whipple's bacillus), this protein is tRNA pseudouridine synthase B.